Here is a 260-residue protein sequence, read N- to C-terminus: Thrombin-like enzyme flavoxobin (260 aa).

The N-terminal stretch at 1–18 (MVLIRVLANLLILQLSYA) is a signal peptide. Residues 19–24 (QKSSEL) constitute a propeptide that is removed on maturation. The Peptidase S1 domain maps to 25 to 251 (VIGGDECNIN…YNAWIQSIIA (227 aa)). Disulfide bonds link Cys31-Cys165, Cys52-Cys68, Cys100-Cys258, Cys144-Cys212, Cys176-Cys191, and Cys202-Cys227. Residues His67 and Asp112 each act as charge relay system in the active site. Ser206 (charge relay system) is an active-site residue.

This sequence belongs to the peptidase S1 family. Snake venom subfamily. In terms of assembly, monomer. Expressed by the venom gland.

The protein resides in the secreted. The catalysed reaction is Selective cleavage of Arg-|-Xaa bond in fibrinogen, to form fibrin, and release fibrinopeptide A. The specificity of further degradation of fibrinogen varies with species origin of the enzyme.. Inhibited by alpha(2)-macroglobulin, diisopropylfluorophosphate (DFP) and PMSF. Low inhibition by tosyl-L-lysine chloromethyl ketone. Its function is as follows. Thrombin-like snake venom serine protease that clots fibrinogen (FGA) by releasing fibrinopeptide A. According to PubMed:8585090, only cleaves rabbit fibrinogen, whereas no specificity is described in PubMed:3910643 (tests done on bovine fibrinogen). Also acts as a C3 convertase that independently cleaves human C3 and kick-starts the complement cascade. Also increases urokinase-type plasminogen activator (PLAU) and plasminogen activator inhibitor (SERPINE1) in cultured bovine pulmonary artery endothelial cells. Dose-dependently inhibits collagen-induced platelet aggregation. The polypeptide is Thrombin-like enzyme flavoxobin (TLF1) (Protobothrops flavoviridis (Habu)).